The following is a 335-amino-acid chain: COP9 signalosome complex subunit 5 (335 aa).

Positions 51 to 187 constitute an MPN domain; sequence VRISAVALLK…IGAFRTFPKD (137 aa). The Zn(2+) site is built by histidine 134, histidine 136, and aspartate 147. Positions 134 to 147 match the JAMM motif motif; the sequence is HSHPGYGCWLSGID.

The protein belongs to the peptidase M67A family. CSN5 subfamily. As to quaternary structure, component of the COP9 signalosome (CSN) complex.

The protein resides in the cytoplasm. It is found in the nucleus. Catalytic component of the COP9 signalosome (CSN) complex that acts as an regulator of the ubiquitin (Ubl) conjugation pathway by mediating the deneddylation of the cullin subunit of SCF-type E3 ubiquitin-protein ligase complexes. The CSN complex seems to link protein degradation to sexual development. Required for fruit body formation. The polypeptide is COP9 signalosome complex subunit 5 (rri1) (Emericella nidulans (strain FGSC A4 / ATCC 38163 / CBS 112.46 / NRRL 194 / M139) (Aspergillus nidulans)).